Here is a 1057-residue protein sequence, read N- to C-terminus: Carbamoyl phosphate synthase large chain (1057 aa).

Positions 1–401 (MPKRNDIKTI…SLLKAIRSLE (401 aa)) are carboxyphosphate synthetic domain. ATP contacts are provided by arginine 129, arginine 169, glycine 175, glycine 176, lysine 208, isoleucine 210, glutamate 215, glycine 241, isoleucine 242, histidine 243, glutamine 284, and glutamate 298. Positions 133–327 (RTLMNDLNVP…IAKLAAKIAV (195 aa)) constitute an ATP-grasp 1 domain. Mg(2+) is bound by residues glutamine 284, glutamate 298, and asparagine 300. Residues glutamine 284, glutamate 298, and asparagine 300 each contribute to the Mn(2+) site. An oligomerization domain region spans residues 402-546 (YGVHHLGLPN…YGTYETENES (145 aa)). Residues 547–929 (IVTDKEKILV…ALFKGLTGSG (383 aa)) are carbamoyl phosphate synthetic domain. In terms of domain architecture, ATP-grasp 2 spans 671-861 (EALLRKINVP…MAQLAMRAII (191 aa)). Positions 707, 746, 748, 752, 777, 778, 779, 780, 820, and 832 each coordinate ATP. The Mg(2+) site is built by glutamine 820, glutamate 832, and asparagine 834. The Mn(2+) site is built by glutamine 820, glutamate 832, and asparagine 834. In terms of domain architecture, MGS-like spans 930-1057 (VEVKDHGTVL…ESMTFTMRQM (128 aa)). The interval 930-1057 (VEVKDHGTVL…ESMTFTMRQM (128 aa)) is allosteric domain.

It belongs to the CarB family. In terms of assembly, composed of two chains; the small (or glutamine) chain promotes the hydrolysis of glutamine to ammonia, which is used by the large (or ammonia) chain to synthesize carbamoyl phosphate. Tetramer of heterodimers (alpha,beta)4. It depends on Mg(2+) as a cofactor. The cofactor is Mn(2+).

It catalyses the reaction hydrogencarbonate + L-glutamine + 2 ATP + H2O = carbamoyl phosphate + L-glutamate + 2 ADP + phosphate + 2 H(+). It carries out the reaction hydrogencarbonate + NH4(+) + 2 ATP = carbamoyl phosphate + 2 ADP + phosphate + 2 H(+). Its pathway is amino-acid biosynthesis; L-arginine biosynthesis; carbamoyl phosphate from bicarbonate: step 1/1. It participates in pyrimidine metabolism; UMP biosynthesis via de novo pathway; (S)-dihydroorotate from bicarbonate: step 1/3. In terms of biological role, large subunit of the glutamine-dependent carbamoyl phosphate synthetase (CPSase). CPSase catalyzes the formation of carbamoyl phosphate from the ammonia moiety of glutamine, carbonate, and phosphate donated by ATP, constituting the first step of 2 biosynthetic pathways, one leading to arginine and/or urea and the other to pyrimidine nucleotides. The large subunit (synthetase) binds the substrates ammonia (free or transferred from glutamine from the small subunit), hydrogencarbonate and ATP and carries out an ATP-coupled ligase reaction, activating hydrogencarbonate by forming carboxy phosphate which reacts with ammonia to form carbamoyl phosphate. The sequence is that of Carbamoyl phosphate synthase large chain from Staphylococcus aureus (strain Mu3 / ATCC 700698).